A 694-amino-acid chain; its full sequence is Inactive protein-arginine deiminase type-6 (694 aa).

Phosphoserine occurs at positions 10 and 446.

The protein belongs to the protein arginine deiminase family. Homodimers. Associates with alpha-tubulin. Phosphorylation at Ser-10, possibly by RSK-type kinases, and Ser-446 creates binding sites for 14-3-3 proteins. In terms of tissue distribution, highly expressed in oocytes and weakly expressed in other somatic tissues.

The protein localises to the cytoplasm. Its subcellular location is the cytoplasmic vesicle. It is found in the secretory vesicle. The protein resides in the cortical granule. It localises to the nucleus. Functionally, structural constituent of cytoplasmic lattices, which plays a key role in early embryonic development. Cytoplasmic lattices consist in fibrous structures found in the cytoplasm of oocytes and preimplantation embryos. They are required to store maternal proteins critical for embryonic development, such as ribosomal proteins and proteins that control epigenetic reprogramming of the preimplantation embryo, and prevent their degradation or activation. In contrast to other members of the family, does not show protein-arginine deiminase activity due to its inability to bind Ca(2+). The polypeptide is Inactive protein-arginine deiminase type-6 (Homo sapiens (Human)).